Consider the following 329-residue polypeptide: Methionyl-tRNA formyltransferase (329 aa).

Residue 117–120 (SLLP) participates in (6S)-5,6,7,8-tetrahydrofolate binding.

The protein belongs to the Fmt family.

The catalysed reaction is L-methionyl-tRNA(fMet) + (6R)-10-formyltetrahydrofolate = N-formyl-L-methionyl-tRNA(fMet) + (6S)-5,6,7,8-tetrahydrofolate + H(+). Functionally, attaches a formyl group to the free amino group of methionyl-tRNA(fMet). The formyl group appears to play a dual role in the initiator identity of N-formylmethionyl-tRNA by promoting its recognition by IF2 and preventing the misappropriation of this tRNA by the elongation apparatus. The polypeptide is Methionyl-tRNA formyltransferase (Paracidovorax citrulli (strain AAC00-1) (Acidovorax citrulli)).